The primary structure comprises 152 residues: Transcriptional regulator MraZ (152 aa).

SpoVT-AbrB domains lie at V5–E51 and A80–L123.

This sequence belongs to the MraZ family. As to quaternary structure, forms oligomers.

It is found in the cytoplasm. Its subcellular location is the nucleoid. The sequence is that of Transcriptional regulator MraZ from Methylococcus capsulatus (strain ATCC 33009 / NCIMB 11132 / Bath).